Consider the following 162-residue polypeptide: Phosphopantetheine adenylyltransferase (162 aa).

Threonine 10 contacts substrate. Residues 10–11 and histidine 18 contribute to the ATP site; that span reads TF. Residues lysine 42, leucine 74, and arginine 88 each contribute to the substrate site. Residues 89-91, glutamate 99, and 124-130 each bind ATP; these read GLR and FSCISST.

This sequence belongs to the bacterial CoaD family. In terms of assembly, homohexamer. Mg(2+) is required as a cofactor.

The protein resides in the cytoplasm. The enzyme catalyses (R)-4'-phosphopantetheine + ATP + H(+) = 3'-dephospho-CoA + diphosphate. It functions in the pathway cofactor biosynthesis; coenzyme A biosynthesis; CoA from (R)-pantothenate: step 4/5. Reversibly transfers an adenylyl group from ATP to 4'-phosphopantetheine, yielding dephospho-CoA (dPCoA) and pyrophosphate. This chain is Phosphopantetheine adenylyltransferase, found in Francisella tularensis subsp. mediasiatica (strain FSC147).